Here is a 102-residue protein sequence, read N- to C-terminus: NADH-quinone oxidoreductase subunit K (102 aa).

3 helical membrane passes run 4 to 24 (IPME…LVGL), 30 to 50 (MLFV…AFIV), and 62 to 82 (VMFL…LALL).

The protein belongs to the complex I subunit 4L family. As to quaternary structure, NDH-1 is composed of 14 different subunits. Subunits NuoA, H, J, K, L, M, N constitute the membrane sector of the complex.

Its subcellular location is the cell inner membrane. The catalysed reaction is a quinone + NADH + 5 H(+)(in) = a quinol + NAD(+) + 4 H(+)(out). Functionally, NDH-1 shuttles electrons from NADH, via FMN and iron-sulfur (Fe-S) centers, to quinones in the respiratory chain. The immediate electron acceptor for the enzyme in this species is believed to be ubiquinone. Couples the redox reaction to proton translocation (for every two electrons transferred, four hydrogen ions are translocated across the cytoplasmic membrane), and thus conserves the redox energy in a proton gradient. This chain is NADH-quinone oxidoreductase subunit K, found in Chromohalobacter salexigens (strain ATCC BAA-138 / DSM 3043 / CIP 106854 / NCIMB 13768 / 1H11).